The following is a 396-amino-acid chain: Ribosomal RNA large subunit methyltransferase I (396 aa).

Positions threonine 2–arginine 81 constitute a PUA domain.

Belongs to the methyltransferase superfamily. RlmI family.

Its subcellular location is the cytoplasm. It catalyses the reaction cytidine(1962) in 23S rRNA + S-adenosyl-L-methionine = 5-methylcytidine(1962) in 23S rRNA + S-adenosyl-L-homocysteine + H(+). Functionally, specifically methylates the cytosine at position 1962 (m5C1962) of 23S rRNA. This Yersinia pestis bv. Antiqua (strain Antiqua) protein is Ribosomal RNA large subunit methyltransferase I.